A 249-amino-acid chain; its full sequence is O-methyltransferase adaD (249 aa).

The span at 1 to 15 (MSSVTLTTTTTTTST) shows a compositional bias: low complexity. A disordered region spans residues 1-26 (MSSVTLTTTTTTTSTPPKPTPKDEPQ).

The protein belongs to the methyltransferase superfamily.

The enzyme catalyses 2-acetyl-3,4a,8,10,11,12a-hexahydroxy-1,4,4a,5,12,12a-hexahydrotetracene-1,12-dione + S-adenosyl-L-methionine = TAN-1612 + S-adenosyl-L-homocysteine + H(+). Its pathway is secondary metabolite biosynthesis. Its function is as follows. O-methyltransferase; part of the gene cluster that mediates the biosynthesis of the linear tetracyclic TAN-1612 neuropeptide Y receptor antagonist. The decaketide backbone of TAN-1612 is synthesized by the non-reducing polyketide synthase adaA via condensation of one acetyl-CoA starter unit with 9 malonyl-CoA units. The FAD-dependent monooxygenase adaC then performs hydroxylation at C2 while the polaketide chain is still attached to the NRPKS adaA. The alpha-hydroxylation step at C2 appears to be crucial for the following C18-C1 Claisen cyclization and release of the C9-hydroxyl version of TAN-1612 from the NRPKS adaA, two steps performed by the lactamase-like protein adaB. Finally, the O-methyltransferase adaD performs the C9 O-methylation to complete the biosynthesis of TAN-1612. The polypeptide is O-methyltransferase adaD (Aspergillus niger).